Consider the following 245-residue polypeptide: 1-(5-phosphoribosyl)-5-[(5-phosphoribosylamino)methylideneamino] imidazole-4-carboxamide isomerase (245 aa).

Asp-7 functions as the Proton acceptor in the catalytic mechanism. Asp-129 functions as the Proton donor in the catalytic mechanism.

It belongs to the HisA/HisF family.

The protein resides in the cytoplasm. The enzyme catalyses 1-(5-phospho-beta-D-ribosyl)-5-[(5-phospho-beta-D-ribosylamino)methylideneamino]imidazole-4-carboxamide = 5-[(5-phospho-1-deoxy-D-ribulos-1-ylimino)methylamino]-1-(5-phospho-beta-D-ribosyl)imidazole-4-carboxamide. Its pathway is amino-acid biosynthesis; L-histidine biosynthesis; L-histidine from 5-phospho-alpha-D-ribose 1-diphosphate: step 4/9. This chain is 1-(5-phosphoribosyl)-5-[(5-phosphoribosylamino)methylideneamino] imidazole-4-carboxamide isomerase, found in Shewanella sp. (strain W3-18-1).